A 596-amino-acid polypeptide reads, in one-letter code: Arginine--tRNA ligase (596 aa).

The 'HIGH' region motif lies at 123-133 (PNTNKPLHLGH).

Belongs to the class-I aminoacyl-tRNA synthetase family. In terms of assembly, monomer.

The protein localises to the cytoplasm. It catalyses the reaction tRNA(Arg) + L-arginine + ATP = L-arginyl-tRNA(Arg) + AMP + diphosphate. The sequence is that of Arginine--tRNA ligase from Amoebophilus asiaticus (strain 5a2).